The primary structure comprises 870 residues: MOG interacting and ectopic P-granules protein 1 (870 aa).

The disordered stretch occupies residues 1–244 (MVTADETVLA…VPEEDNNEQA (244 aa)). The segment covering 9–20 (LATTTNTTSMSV) has biased composition (polar residues). Residues 41 to 51 (EQLKAEQREVM) show a composition bias toward basic and acidic residues. Acidic residues-rich tracts occupy residues 77–99 (EVIE…DENG), 129–142 (IEQD…EITE), and 203–214 (IELDDDDDDEIQ). C2H2-type zinc fingers lie at residues 421 to 444 (HRCD…ENLH) and 450 to 473 (FQCT…FETH). A CCHC-type zinc finger spans residues 486–508 (YPCAICEEDFNFKGVREQHYKQC). Polar residues-rich tracts occupy residues 673–688 (LQAA…SQKT) and 695–708 (KLVT…VGSS). The interval 673-708 (LQAAVNSMRSQNSQKTPTHRSSKLVTTPSHATVGSS) is disordered. 4 consecutive C2H2-type zinc fingers follow at residues 713 to 736 (FVCE…QTTH), 753 to 776 (LACS…VMSH), 794 to 815 (GRCK…VADH), and 826 to 849 (YSCD…TSNH). The segment at 847 to 870 (SNHPKGDKKTSTPAKKDDCITLDD) is disordered. Residues 850 to 870 (PKGDKKTSTPAKKDDCITLDD) show a composition bias toward basic and acidic residues.

In terms of assembly, interacts with hda-1, let-418, lin-1, mog-1, mog-4, mog-5, mog-6, pie-1 and unc-98. Sumoylated. As to expression, expressed in somatic cells of embryos, the head, hypodermis and tail of larvae and the germline of adults, including oocytes but not mature sperm and spermatocytes.

The protein resides in the nucleus. Its function is as follows. Has a broad role in development, specifically in the genetic pathway SynMuvB that negatively regulates specification of the vulval cell fate. Required for fem-3 3'-UTR-mediated repression in the regulation of the sperm/oocyte switch. Acts by regulating the translation of fem-3 mRNA, by binding to its 3'-UTR. The sequence is that of MOG interacting and ectopic P-granules protein 1 from Caenorhabditis elegans.